A 110-amino-acid polypeptide reads, in one-letter code: Holo-[acyl-carrier-protein] synthase (110 aa).

Residues Asp-8 and Glu-54 each contribute to the Mg(2+) site.

It belongs to the P-Pant transferase superfamily. AcpS family. Requires Mg(2+) as cofactor.

It localises to the cytoplasm. It carries out the reaction apo-[ACP] + CoA = holo-[ACP] + adenosine 3',5'-bisphosphate + H(+). Functionally, transfers the 4'-phosphopantetheine moiety from coenzyme A to a Ser of acyl-carrier-protein. The polypeptide is Holo-[acyl-carrier-protein] synthase (Mycoplasma capricolum subsp. capricolum (strain California kid / ATCC 27343 / NCTC 10154)).